The following is a 258-amino-acid chain: ER membrane protein complex subunit 3 (258 aa).

Helical transmembrane passes span P8–L28, V123–L143, and S173–G193.

This sequence belongs to the EMC3 family.

It is found in the cytoplasm. The protein localises to the membrane. The protein is ER membrane protein complex subunit 3 of Schizosaccharomyces pombe (strain 972 / ATCC 24843) (Fission yeast).